A 565-amino-acid polypeptide reads, in one-letter code: NAD-dependent malic enzyme (565 aa).

Residue Tyr-104 is the Proton donor of the active site. Arg-157 is a binding site for NAD(+). The active-site Proton acceptor is Lys-175. Positions 246, 247, and 270 each coordinate a divalent metal cation. Positions 270 and 418 each coordinate NAD(+).

It belongs to the malic enzymes family. In terms of assembly, homotetramer. Requires Mg(2+) as cofactor. Mn(2+) is required as a cofactor.

It carries out the reaction (S)-malate + NAD(+) = pyruvate + CO2 + NADH. The catalysed reaction is oxaloacetate + H(+) = pyruvate + CO2. The chain is NAD-dependent malic enzyme from Pectobacterium atrosepticum (strain SCRI 1043 / ATCC BAA-672) (Erwinia carotovora subsp. atroseptica).